Consider the following 601-residue polypeptide: uncharacterized protein (601 aa).

Basic residues predominate over residues 24–35 (RKSNVVLKKNKG). Disordered regions lie at residues 24–106 (RKSN…LKLD) and 171–219 (YGND…PREE). Residues 54–81 (SQFSSRDNFRTTQTQASSSSEPSDNTNR) show a composition bias toward polar residues. Positions 92-106 (TPKKEESNAEKLKLD) are enriched in basic and acidic residues. Phosphoserine occurs at positions 236 and 238. A disordered region spans residues 260-283 (RKRKVLSSSSEDDESSSPEDLLKP).

Its subcellular location is the nucleus. This is an uncharacterized protein from Schizosaccharomyces pombe (strain 972 / ATCC 24843) (Fission yeast).